The primary structure comprises 155 residues: Small ribosomal subunit protein uS7cz/uS7cy (155 aa).

This sequence belongs to the universal ribosomal protein uS7 family. In terms of assembly, part of the 30S ribosomal subunit.

The protein localises to the plastid. Its subcellular location is the chloroplast. Functionally, one of the primary rRNA binding proteins, it binds directly to 16S rRNA where it nucleates assembly of the head domain of the 30S subunit. This chain is Small ribosomal subunit protein uS7cz/uS7cy (rps7-A), found in Phalaenopsis aphrodite subsp. formosana (Moth orchid).